A 344-amino-acid chain; its full sequence is Glucan endo-1,3-beta-glucosidase (344 aa).

Positions 1–27 are cleaved as a signal peptide; the sequence is MALTRNRPFVVVLLLGFVIMSTITIGA. Glutamate 123 functions as the Proton donor in the catalytic mechanism. The active-site Nucleophile is glutamate 268.

It belongs to the glycosyl hydrolase 17 family.

It catalyses the reaction Hydrolysis of (1-&gt;3)-beta-D-glucosidic linkages in (1-&gt;3)-beta-D-glucans.. Its function is as follows. Implicated in the defense of plants against pathogens. This Vitis vinifera (Grape) protein is Glucan endo-1,3-beta-glucosidase.